A 106-amino-acid chain; its full sequence is Large ribosomal subunit protein bL21 (106 aa).

The protein belongs to the bacterial ribosomal protein bL21 family. Part of the 50S ribosomal subunit. Contacts protein L20.

This protein binds to 23S rRNA in the presence of protein L20. The protein is Large ribosomal subunit protein bL21 of Xanthomonas campestris pv. campestris (strain ATCC 33913 / DSM 3586 / NCPPB 528 / LMG 568 / P 25).